The chain runs to 139 residues: METDCNPMELSSMSGFEEGSELNGFEGTDMKDMRLEAEAVVNDVLFAVNNMFVSKSLRCADDVAYINVETKERNRYCLELTEAGLKVVGYDFDQVDDHLQTPYHETVYSLLDTLSPAYREAFGNALLQRLEALKRDGQS.

A disordered region spans residues 1–22 (METDCNPMELSSMSGFEEGSEL). Positions 41 to 45 (VNDVL) are required for PRKAR2A interaction; contributes to a protective effect against H(2)O(2)-induced apoptosis. An interaction with GSK3B and acts as a GSK3B inhibitor region spans residues 115 to 139 (SPAYREAFGNALLQRLEALKRDGQS).

Belongs to the GSKIP family. As to quaternary structure, forms a complex composed of PRKAR2A or PRKAR2B, GSK3B and GSKIP through GSKIP interaction; facilitates PKA-induced phosphorylation of GSK3B leading to GSK3B inactivation; recruits DNM1L through GSK3B for PKA-mediated phosphorylation of DNM1L; promotes beta-catenin degradation through GSK3B-induced phosphorylation of beta-catenin; stabilizes beta-catenin and enhances Wnt-induced signaling through PKA-induced phosphorylation of beta-catenin. Interacts with GSK3B; induces GSK3B-mediated phosphorylation of GSKIP and inhibits GSK3B kinase activity. In terms of processing, phosphorylated by GSK3B.

The protein localises to the cytoplasm. The protein resides in the nucleus. A-kinase anchoring protein for GSK3B and PKA that regulates or facilitates their kinase activity towards their targets. The ternary complex enhances Wnt-induced signaling by facilitating the GSK3B- and PKA-induced phosphorylation of beta-catenin leading to beta-catenin degradation and stabilization respectively. Upon cAMP activation, the ternary complex contributes to neuroprotection against oxidative stress-induced apoptosis by facilitating the PKA-induced phosphorylation of DML1 and PKA-induced inactivation of GSK3B. During neurite outgrowth promotes neuron proliferation; while increases beta-catenin-induced transcriptional activity through GSK3B kinase activity inhibition, reduces N-cadherin level to promote cell cycle progression. May play a role in cleft palate formation and is required for postnatal life through modulation of the activity of GSK3B during development. This Macaca fascicularis (Crab-eating macaque) protein is GSK3-beta interaction protein.